A 314-amino-acid polypeptide reads, in one-letter code: Formate-nitrite transporter (314 aa).

Over 1-47 (MSKGKSKYVIDPISVKTACTSEESYIRCVEYGKGKAHYPNLSLLAKA) the chain is Cytoplasmic. The chain crosses the membrane as a helical span at residues 48-68 (ILAGVFVGVCAHASGIAGGHF). The Extracellular portion of the chain corresponds to 69-78 (YYHKLREYVG). A helical transmembrane segment spans residues 79 to 99 (ISMSAFVYGFTFPIAFLCIIA). The Cytoplasmic segment spans residues 100-128 (TGSDLFTGNTLAVTTALLQRKVSLLQYLR). The chain crosses the membrane as a helical span at residues 129–149 (VMSISLFGNYLGAVSFAFFVS). The Extracellular segment spans residues 150–185 (HLSGAYEKHTDVTKNHIFQFLNDIAEKKISHTFIQC). Residues 186-206 (ICLAIGCNIFVCLAVYFVLTI) form a helical membrane-spanning segment. The Cytoplasmic segment spans residues 207–211 (KDGSG). The chain crosses the membrane as a helical span at residues 212–232 (MVFSVFFAVYAFAIAGYEHII). Residues 233-257 (ANMYTLNLALMVEAKVTWSKVYFHN) lie on the Extracellular side of the membrane. Residues 258 to 278 (LLPTLIGNYIAGALVLACPLF) form a helical membrane-spanning segment. Topologically, residues 279 to 314 (YIYRNSYRDYERTRGDGSNCGLRSLSIEMQNGSNGN) are cytoplasmic.

Belongs to the FNT transporter (TC 1.A.16) family. As to quaternary structure, homopentamer.

The protein resides in the cell membrane. Its subcellular location is the vacuole membrane. It carries out the reaction (S)-lactate(in) + H(+)(in) = (S)-lactate(out) + H(+)(out). The catalysed reaction is formate(in) + H(+)(in) = formate(out) + H(+)(out). The enzyme catalyses pyruvate(out) + H(+)(out) = pyruvate(in) + H(+)(in). It catalyses the reaction acetate(out) + H(+)(out) = acetate(in) + H(+)(in). With respect to regulation, inhibited by the Malaria Box compound MMV007839 and its derivatives BH296 and BH267.meta. Its function is as follows. Monocarboxylate-proton symporter that mediates the efflux of the waste product lactate in the intraerythrocytic parasites; active in acidic-to-neutral pH range. Transports L-lactate. The sequence is that of Formate-nitrite transporter from Plasmodium knowlesi (strain H).